We begin with the raw amino-acid sequence, 978 residues long: Rab3 GTPase-activating protein catalytic subunit (978 aa).

Disordered regions lie at residues 533-554, 586-621, and 908-936; these read EGKK…TASD, HSDT…RLHQ, and EEEP…GREL. Residues 540–554 show a composition bias toward polar residues; it reads LYSSSESSVNKTASD. 2 stretches are compositionally biased toward basic and acidic residues: residues 586 to 619 and 909 to 922; these read HSDT…EGRL and EEPK…DRRQ.

It belongs to the Rab3-GAP catalytic subunit family. The Rab3 GTPase-activating complex is a heterodimer composed of rab3gap1 and rab3gap2. The Rab3 GTPase-activating complex interacts with DMXL2. Interacts with LMAN1.

It localises to the cytoplasm. The protein localises to the endoplasmic reticulum. It is found in the golgi apparatus. Its subcellular location is the cis-Golgi network. Catalytic subunit of the Rab3 GTPase-activating (Rab3GAP) complex composed of rab3gap1 and rab3gap2, which has GTPase-activating protein (GAP) activity towards various Rab3 subfamily members (RAB3A, RAB3B, RAB3C and RAB3D), RAB5A and RAB43, and guanine nucleotide exchange factor (GEF) activity towards RAB18. As part of the Rab3GAP complex, acts as a GAP for Rab3 proteins by converting active RAB3-GTP to the inactive form RAB3-GDP. Rab3 proteins are involved in regulated exocytosis of neurotransmitters and hormones. The Rab3GAP complex, acts as a GEF for RAB18 by promoting the conversion of inactive RAB18-GDP to the active form RAB18-GTP. Recruits and stabilizes RAB18 at the cis-Golgi membrane where RAB18 is most likely activated. Also involved in RAB18 recruitment at the endoplasmic reticulum (ER) membrane where it maintains proper ER structure. Required for normal eye and brain development. May participate in neurodevelopmental processes such as proliferation, migration and differentiation before synapse formation, and non-synaptic vesicular release of neurotransmitters. This Xenopus laevis (African clawed frog) protein is Rab3 GTPase-activating protein catalytic subunit (rab3gap1).